The following is a 506-amino-acid chain: Maturase K (506 aa).

It belongs to the intron maturase 2 family. MatK subfamily.

The protein localises to the plastid. It localises to the chloroplast. In terms of biological role, usually encoded in the trnK tRNA gene intron. Probably assists in splicing its own and other chloroplast group II introns. This chain is Maturase K, found in Melilotus indicus (Sourclover).